The following is a 164-amino-acid chain: Transcription elongation factor GreA (164 aa).

The protein belongs to the GreA/GreB family.

In terms of biological role, necessary for efficient RNA polymerase transcription elongation past template-encoded arresting sites. The arresting sites in DNA have the property of trapping a certain fraction of elongating RNA polymerases that pass through, resulting in locked ternary complexes. Cleavage of the nascent transcript by cleavage factors such as GreA or GreB allows the resumption of elongation from the new 3'terminus. GreA releases sequences of 2 to 3 nucleotides. The sequence is that of Transcription elongation factor GreA from Helicobacter pylori (strain Shi470).